The chain runs to 385 residues: Prepilin peptidase EppA (385 aa).

10 helical membrane-spanning segments follow: residues 1–21 (MILM…CFYA), 29–49 (GIIP…LNGA), 58–78 (WIFI…YILW), 80–100 (MVAW…LLPF), 104–124 (LVSY…PFPL), 126–146 (VIIN…FFII), 166–186 (TSMV…LITD), 187–207 (FLPF…TMVI), 231–251 (FELT…IQLI), and 358–378 (PAIF…MILF).

Belongs to the peptidase A24 family.

The protein resides in the cell membrane. In terms of biological role, peptidase that processes the N-terminus of prepilins. In Methanothermobacter thermautotrophicus (strain ATCC 29096 / DSM 1053 / JCM 10044 / NBRC 100330 / Delta H) (Methanobacterium thermoautotrophicum), this protein is Prepilin peptidase EppA.